A 419-amino-acid chain; its full sequence is UDP-N-acetylglucosamine 1-carboxyvinyltransferase 2 (419 aa).

Phosphoenolpyruvate is bound at residue 24–25 (KN). Arg94 is a UDP-N-acetyl-alpha-D-glucosamine binding site. Catalysis depends on Cys118, which acts as the Proton donor. The residue at position 118 (Cys118) is a 2-(S-cysteinyl)pyruvic acid O-phosphothioketal. UDP-N-acetyl-alpha-D-glucosamine is bound by residues 123–127 (RPIDQ), Asp307, and Ile329.

This sequence belongs to the EPSP synthase family. MurA subfamily.

The protein localises to the cytoplasm. The enzyme catalyses phosphoenolpyruvate + UDP-N-acetyl-alpha-D-glucosamine = UDP-N-acetyl-3-O-(1-carboxyvinyl)-alpha-D-glucosamine + phosphate. Its pathway is cell wall biogenesis; peptidoglycan biosynthesis. In terms of biological role, cell wall formation. Adds enolpyruvyl to UDP-N-acetylglucosamine. In Staphylococcus aureus (strain MSSA476), this protein is UDP-N-acetylglucosamine 1-carboxyvinyltransferase 2.